A 425-amino-acid polypeptide reads, in one-letter code: Glucan 1,3-beta-glucosidase (425 aa).

A signal peptide spans 1–17; it reads MLLTFAPIFLLISSIVA. Glu-214 (proton donor) is an active-site residue. Intrachain disulfides connect Cys-301-Cys-423 and Cys-326-Cys-352. Residue Lys-328 is the Nucleophile of the active site.

This sequence belongs to the glycosyl hydrolase 5 (cellulase A) family.

Its subcellular location is the secreted. The enzyme catalyses Successive hydrolysis of beta-D-glucose units from the non-reducing ends of (1-&gt;3)-beta-D-glucans, releasing alpha-glucose.. Functionally, beta-glucanases participate in the metabolism of beta-glucan, the main structural component of the cell wall. It could also function biosynthetically as a transglycosylase. This chain is Glucan 1,3-beta-glucosidase (EXG1), found in Candida oleophila (Yeast).